The following is a 243-amino-acid chain: Hydroxyacylglutathione hydrolase (243 aa).

Histidine 59, histidine 61, aspartate 63, histidine 64, histidine 117, aspartate 135, and histidine 173 together coordinate Zn(2+).

Belongs to the metallo-beta-lactamase superfamily. Glyoxalase II family. Monomer. The cofactor is Zn(2+).

It carries out the reaction an S-(2-hydroxyacyl)glutathione + H2O = a 2-hydroxy carboxylate + glutathione + H(+). It participates in secondary metabolite metabolism; methylglyoxal degradation; (R)-lactate from methylglyoxal: step 2/2. Its function is as follows. Thiolesterase that catalyzes the hydrolysis of S-D-lactoyl-glutathione to form glutathione and D-lactic acid. This chain is Hydroxyacylglutathione hydrolase, found in Acidiphilium cryptum (strain JF-5).